We begin with the raw amino-acid sequence, 354 residues long: UPF0324 membrane protein BL1094 (354 aa).

Helical transmembrane passes span Ile12–Trp33, Phe43–Val65, Leu86–Ile108, Pro112–Ala129, Leu138–Ser160, Val175–Gly197, Leu239–Trp256, Val271–Val293, Leu300–Phe321, and Pro331–Phe353.

Belongs to the UPF0324 family.

Its subcellular location is the cell membrane. This is UPF0324 membrane protein BL1094 from Bifidobacterium longum (strain NCC 2705).